The primary structure comprises 1334 residues: WASH complex subunit 2 (1334 aa).

The tract at residues 1–219 (MNRTSPDSER…VGSDRGSIVD (219 aa)) is sufficient for interaction with WASHC3, WASHC4 and WASHC5; required for interaction with WASHC1. A phosphoserine mark is found at Ser-157, Ser-159, Ser-204, Ser-205, and Ser-209. Over residues 201 to 213 (GELSSEEGSVGSD) the composition is skewed to low complexity. Residues 201–471 (GELSSEEGSV…SKPSKTDKVK (271 aa)) form a disordered region. 2 stretches are compositionally biased toward acidic residues: residues 219–232 (DSEDEKEEEESDED) and 249–274 (SDEEEDDDGDLFADSEKEGDDIEDIE). A Phosphoserine modification is found at Ser-284. The span at 289 to 324 (LAARIKGDISNQRKEGQTDGKPQKTVKEKKERRTPA) shows a compositional bias: basic and acidic residues. Position 322 is a phosphothreonine (Thr-322). Residues 347–594 (SRGGLFSNGQ…QTSSLQPQSQ (248 aa)) are sufficient for interaction with CCDC93. The interaction with VPS35 stretch occupies residues 348-1334 (RGGLFSNGQG…DDPLNAFGSQ (987 aa)). Residues 358–368 (LFDDEDESDLF) carry the LFa 1 motif. Ser-388 bears the Phosphoserine mark. 2 short sequence motifs (LFa) span residues 441 to 457 (LFDDDDNDNDEDDNNFF) and 476 to 485 (IFDDDEGDLF). Acidic residues predominate over residues 442–454 (FDDDDNDNDEDDN). The segment at 492–650 (LPAASVSQTH…DSGATQGQEA (159 aa)) is disordered. A compositionally biased stretch (polar residues) spans 513–530 (LPSSKNLKLVSETKTQKG). Short sequence motifs (LFa) lie at residues 531–542 (LFSDEEDSEDLF) and 566–577 (LFGDEDEEDSLF). 2 positions are modified to phosphoserine: Ser-533 and Ser-538. A compositionally biased stretch (low complexity) spans 541–561 (LFSSQSSSKPKSASLPSSQPP). Polar residues-rich tracts occupy residues 584–594 (KQTSSLQPQSQ) and 601–611 (EQPSKKTSALL). 2 positions are modified to phosphoserine: Ser-613 and Ser-614. A compositionally biased stretch (basic and acidic residues) spans 625 to 639 (SHTKLASDNKSKGEL). 2 short sequence motifs (LFa) span residues 658–670 (LFEDDDDDEVDLF) and 686–698 (LFEDDAESGSSLF). The tract at residues 691 to 837 (AESGSSLFGL…SRPKSTGVFQ (147 aa)) is disordered. Residues Ser-723, Ser-747, Ser-752, Ser-783, and Ser-798 each carry the phosphoserine modification. The segment covering 800–811 (FDEDEDKVEDES) has biased composition (acidic residues). Residues 818–830 (DGREKGLKTDSRP) show a composition bias toward basic and acidic residues. 2 consecutive short sequence motifs (LFa) follow at residues 835-843 (VFQDEELLF) and 852-858 (DPDVDLF). Disordered stretches follow at residues 862–948 (KKIR…PSSR) and 1014–1225 (AQAD…SKTH). 2 positions are modified to phosphoserine: Ser-870 and Ser-873. The LFa 10 signature appears at 874–884 (LFGDDEDDDLF). Residues 894–906 (PEKKGTLKKDHPV) show a composition bias toward basic and acidic residues. Residues 908–919 (LKNQDPLDSTQG) show a composition bias toward polar residues. Residues 932–1334 (QDSSGLTPFK…DDPLNAFGSQ (403 aa)) are interaction with phospholipids. The span at 1023 to 1041 (NKSRVKVRGKRRPQTRAAR) shows a compositional bias: basic residues. A required for interaction with F-actin-capping protein subunit alpha (CAPZA1 or CAPZA2 or CAPZA3) region spans residues 1024–1042 (KSRVKVRGKRRPQTRAARR). 4 positions are modified to phosphoserine: Ser-1049, Ser-1067, Ser-1084, and Ser-1109. 3 short sequence motifs (LFa) span residues 1124 to 1131 (LFDSGDIF), 1164 to 1178 (AFPDLSEGSSTEDLF), and 1194 to 1202 (LLEDEEDLF). Ser-1169, Ser-1172, and Ser-1173 each carry phosphoserine. Over residues 1203–1225 (ADPRGKKNERKPDSHQDSVSKTH) the composition is skewed to basic and acidic residues. Short sequence motifs (LFa) lie at residues 1227 to 1233 (IFEDDIF), 1255 to 1263 (LFDDNIDIF), and 1283 to 1292 (MFDDDTDDIF). Residues 1294-1334 (SGLQAKASKPKSQSAEAASEQRSEHKVASIFDDPLNAFGSQ) are disordered. The span at 1297-1311 (QAKASKPKSQSAEAA) shows a compositional bias: low complexity. The LFa 17 motif lies at 1323-1331 (IFDDPLNAF). At Ser-1333 the chain carries Phosphoserine.

It belongs to the FAM21 family. Component of the WASH core complex also described as WASH regulatory complex (SHRC) composed of WASHC1, WASHC2, WASHC3, WASHC4 and WASHC5; in the complex interacts (via N-terminus) directly with WASHC1. The WASH core complex associates with the F-actin-capping protein dimer (formed by CAPZA1, CAPZA2 or CAPZA3 and CAPZB) in a transient or substoichiometric manner which was initially described as WASH complex. Interacts with VPS35; mediates the association with the retromer CSC complex. Interacts with FKBP15. Interacts with CCDC93, CCDC22, VPS35L; indicative for an association of the WASH core complex with the CCC and retriever complexes. Directly interacts with TBC1D23.

It localises to the early endosome membrane. It is found in the cell membrane. Its function is as follows. Acts as a component of the WASH core complex that functions as a nucleation-promoting factor (NPF) at the surface of endosomes, where it recruits and activates the Arp2/3 complex to induce actin polymerization, playing a key role in the fission of tubules that serve as transport intermediates during endosome sorting. Mediates the recruitment of the WASH core complex to endosome membranes via binding to phospholipids and VPS35 of the retromer CSC. Mediates the recruitment of the F-actin-capping protein dimer to the WASH core complex probably promoting localized F-actin polymerization needed for vesicle scission. Via its C-terminus binds various phospholipids, most strongly phosphatidylinositol 4-phosphate (PtdIns-(4)P), phosphatidylinositol 5-phosphate (PtdIns-(5)P) and phosphatidylinositol 3,5-bisphosphate (PtdIns-(3,5)P2). Involved in the endosome-to-plasma membrane trafficking and recycling of SNX27-retromer-dependent cargo proteins, such as GLUT1. Required for the association of DNAJC13, ENTR1, ANKRD50 with retromer CSC subunit VPS35. Required for the endosomal recruitment of CCC and retriever complexes subunits COMMD1 and CCDC93 as well as the retrievere complex subunit VPS35L. This Mus musculus (Mouse) protein is WASH complex subunit 2.